Here is a 162-residue protein sequence, read N- to C-terminus: UPF0114 protein SO_3997 (162 aa).

Transmembrane regions (helical) follow at residues 10–32, 53–75, and 136–156; these read YASR…GLGI, LVLV…MVMF, and IMWY…MGYL.

It belongs to the UPF0114 family.

The protein resides in the cell membrane. The polypeptide is UPF0114 protein SO_3997 (Shewanella oneidensis (strain ATCC 700550 / JCM 31522 / CIP 106686 / LMG 19005 / NCIMB 14063 / MR-1)).